The primary structure comprises 354 residues: Protein RecA (354 aa).

78 to 85 lines the ATP pocket; that stretch reads GPESSGKT.

The protein belongs to the RecA family.

Its subcellular location is the cytoplasm. Functionally, can catalyze the hydrolysis of ATP in the presence of single-stranded DNA, the ATP-dependent uptake of single-stranded DNA by duplex DNA, and the ATP-dependent hybridization of homologous single-stranded DNAs. It interacts with LexA causing its activation and leading to its autocatalytic cleavage. The chain is Protein RecA from Zymomonas mobilis subsp. mobilis (strain ATCC 31821 / ZM4 / CP4).